The following is a 418-amino-acid chain: Nucleoside permease NupG (418 aa).

The Cytoplasmic portion of the chain corresponds to Met1 to Lys4. Residues Leu5–Met29 traverse the membrane as a helical segment. Residues Phe30 to Asp36 lie on the Periplasmic side of the membrane. The chain crosses the membrane as a helical span at residues Gly37–Leu58. Residues Gly59–Ser67 lie on the Cytoplasmic side of the membrane. Residues Ala68–Gln88 form a helical membrane-spanning segment. Topologically, residues Val89–Thr91 are periplasmic. A helical membrane pass occupies residues Pro92–Ile113. Over Asn114 to Ile135 the chain is Cytoplasmic. The chain crosses the membrane as a helical span at residues Arg136–Glu156. The Periplasmic portion of the chain corresponds to Leu157–Ser158. The helical transmembrane segment at His159 to Thr178 threads the bilayer. Topologically, residues Leu179–Arg209 are cytoplasmic. The helical transmembrane segment at Met210 to His236 threads the bilayer. The Periplasmic segment spans residues Ser237–Ser247. Residues Phe248 to Ile268 traverse the membrane as a helical segment. Topologically, residues Leu269–Ile280 are cytoplasmic. The helical transmembrane segment at Lys281–Tyr300 threads the bilayer. Residues Gly301–Pro305 are Periplasmic-facing. The helical transmembrane segment at Phe306–Asn326 threads the bilayer. The Cytoplasmic portion of the chain corresponds to Ile327 to Gln346. A helical membrane pass occupies residues Gly347–Val369. Residues Glu370 to Asp379 lie on the Periplasmic side of the membrane. Residues Trp380 to Lys403 form a helical membrane-spanning segment. Over Tyr404–His418 the chain is Cytoplasmic.

This sequence belongs to the major facilitator superfamily. Nucleoside:H(+) symporter (NHS) (TC 2.A.1.10) family.

The protein localises to the cell inner membrane. It catalyses the reaction adenosine(in) + H(+)(in) = adenosine(out) + H(+)(out). It carries out the reaction uridine(in) + H(+)(in) = uridine(out) + H(+)(out). The catalysed reaction is thymidine(in) + H(+)(in) = thymidine(out) + H(+)(out). The enzyme catalyses cytidine(in) + H(+)(in) = cytidine(out) + H(+)(out). It catalyses the reaction 2'-deoxycytidine(in) + H(+)(in) = 2'-deoxycytidine(out) + H(+)(out). It carries out the reaction guanosine(in) + H(+)(in) = guanosine(out) + H(+)(out). The catalysed reaction is inosine(in) + H(+)(in) = inosine(out) + H(+)(out). With respect to regulation, inhibited by the protonophore uncouplers 2,4-dinitrophenol and carbonyl cyanide m-chlorophenylhydrazone (CCCP), and by valinomycin. Inhibited by the nucleoside antibiotic showdomycin. In terms of biological role, broad-specificity transporter of purine and pyrimidine nucleosides. Can transport adenosine, uridine, thymidine, cytidine, deoxycytidine, guanosine and inosine. Can also transport xanthosine, but with a very low affinity. Transport is driven by a proton motive force. This Escherichia coli (strain K12) protein is Nucleoside permease NupG.